Here is a 396-residue protein sequence, read N- to C-terminus: GTPase Obg (396 aa).

The Obg domain maps to 1 to 159; it reads MKFVDEASIY…RTLKLEMKVL (159 aa). The segment at 120–146 is disordered; sequence GGHHGLGNTRFKSSTNRAPRQTTKGTV. The span at 129-144 shows a compositional bias: polar residues; sequence RFKSSTNRAPRQTTKG. The OBG-type G domain occupies 160–333; it reads ADVGLLGLPN…LCLDLMTALD (174 aa). GTP-binding positions include 166-173, 191-195, 213-216, 283-286, and 314-316; these read GLPNAGKS, FTTLV, DIPG, NKTD, and SAI. 2 residues coordinate Mg(2+): S173 and T193.

Belongs to the TRAFAC class OBG-HflX-like GTPase superfamily. OBG GTPase family. In terms of assembly, monomer. It depends on Mg(2+) as a cofactor.

It localises to the cytoplasm. Its function is as follows. An essential GTPase which binds GTP, GDP and possibly (p)ppGpp with moderate affinity, with high nucleotide exchange rates and a fairly low GTP hydrolysis rate. Plays a role in control of the cell cycle, stress response, ribosome biogenesis and in those bacteria that undergo differentiation, in morphogenesis control. The polypeptide is GTPase Obg (Marinomonas sp. (strain MWYL1)).